The primary structure comprises 298 residues: Acetylglutamate kinase (298 aa).

Substrate is bound by residues 73–74 (GG), R95, and N188.

Belongs to the acetylglutamate kinase family. ArgB subfamily.

It is found in the cytoplasm. The enzyme catalyses N-acetyl-L-glutamate + ATP = N-acetyl-L-glutamyl 5-phosphate + ADP. It participates in amino-acid biosynthesis; L-arginine biosynthesis; N(2)-acetyl-L-ornithine from L-glutamate: step 2/4. In terms of biological role, catalyzes the ATP-dependent phosphorylation of N-acetyl-L-glutamate. This Nostoc punctiforme (strain ATCC 29133 / PCC 73102) protein is Acetylglutamate kinase.